The sequence spans 217 residues: Outer-membrane lipoprotein LolB (217 aa).

Positions 1 to 20 are cleaved as a signal peptide; that stretch reads MSRAVRTLALGGLVLVGLSA. The N-palmitoyl cysteine moiety is linked to residue C21. The S-diacylglycerol cysteine moiety is linked to residue C21.

This sequence belongs to the LolB family. As to quaternary structure, monomer.

The protein localises to the cell outer membrane. Its function is as follows. Plays a critical role in the incorporation of lipoproteins in the outer membrane after they are released by the LolA protein. The protein is Outer-membrane lipoprotein LolB of Xanthomonas euvesicatoria pv. vesicatoria (strain 85-10) (Xanthomonas campestris pv. vesicatoria).